The sequence spans 410 residues: Dual-specificity RNA methyltransferase RlmN (410 aa).

The disordered stretch occupies residues Val-7–Ala-26. The span at Gln-15–Ala-26 shows a compositional bias: low complexity. The active-site Proton acceptor is Glu-120. The Radical SAM core domain occupies Thr-130–Asp-373. An intrachain disulfide couples Cys-137 to Cys-378. The [4Fe-4S] cluster site is built by Cys-144, Cys-148, and Cys-151. S-adenosyl-L-methionine contacts are provided by residues Gly-200–Glu-201, Ser-232, Ser-254–His-256, and Asn-335. The active-site S-methylcysteine intermediate is the Cys-378.

This sequence belongs to the radical SAM superfamily. RlmN family. The cofactor is [4Fe-4S] cluster.

It is found in the cytoplasm. The enzyme catalyses adenosine(2503) in 23S rRNA + 2 reduced [2Fe-2S]-[ferredoxin] + 2 S-adenosyl-L-methionine = 2-methyladenosine(2503) in 23S rRNA + 5'-deoxyadenosine + L-methionine + 2 oxidized [2Fe-2S]-[ferredoxin] + S-adenosyl-L-homocysteine. The catalysed reaction is adenosine(37) in tRNA + 2 reduced [2Fe-2S]-[ferredoxin] + 2 S-adenosyl-L-methionine = 2-methyladenosine(37) in tRNA + 5'-deoxyadenosine + L-methionine + 2 oxidized [2Fe-2S]-[ferredoxin] + S-adenosyl-L-homocysteine. Functionally, specifically methylates position 2 of adenine 2503 in 23S rRNA and position 2 of adenine 37 in tRNAs. m2A2503 modification seems to play a crucial role in the proofreading step occurring at the peptidyl transferase center and thus would serve to optimize ribosomal fidelity. The protein is Dual-specificity RNA methyltransferase RlmN of Acinetobacter baumannii (strain AB307-0294).